The following is a 57-amino-acid chain: MATPKRRMSRANTRSRRSQWKATKAELVGVTVAGQKHKVPRRLLKAARLGLIDLDRR.

The span at 1–19 (MATPKRRMSRANTRSRRSQ) shows a compositional bias: basic residues. Residues 1–20 (MATPKRRMSRANTRSRRSQW) form a disordered region.

It belongs to the bacterial ribosomal protein bL32 family.

The chain is Large ribosomal subunit protein bL32 from Mycobacterium marinum (strain ATCC BAA-535 / M).